The primary structure comprises 177 residues: Prorelaxin (177 aa).

Residues 1–25 form the signal peptide; sequence MLRWFLSHLLGVWLLLSQLPREIPA. Cystine bridges form between Cys34/Cys164, Cys46/Cys177, and Cys163/Cys168. Residues 63–149 constitute a propeptide, connecting peptide; it reads QISEPLAEVV…KSLSKLDKHP (87 aa).

The protein belongs to the insulin family. In terms of assembly, heterodimer of a B chain and an A chain linked by two disulfide bonds. As to expression, placenta; syncytiotrophoblast.

It localises to the secreted. Its function is as follows. Relaxin is an ovarian hormone that acts with estrogen to produce dilatation of the birth canal in many mammals. This is Prorelaxin (RLN) from Canis lupus familiaris (Dog).